Consider the following 133-residue polypeptide: Gamma-crystallin 1 (133 aa).

Residues 1–41 (WMLYEHPNYTGHQYFLRRGEYPDFQQWMGLNDSIRSCRVIP) enclose the Beta/gamma crystallin 'Greek key' 2 domain. Residues 42-46 (QHRGS) are connecting peptide. Beta/gamma crystallin 'Greek key' domains are found at residues 47 to 87 (FRLR…NVLE) and 88 to 130 (GHWI…RRVQ).

Belongs to the beta/gamma-crystallin family. As to quaternary structure, monomer.

Its function is as follows. Crystallins are the dominant structural components of the vertebrate eye lens. The sequence is that of Gamma-crystallin 1 from Rana temporaria (European common frog).